Reading from the N-terminus, the 154-residue chain is Ribosomal RNA large subunit methyltransferase H (154 aa).

S-adenosyl-L-methionine-binding residues include Leu71 and Gly103.

The protein belongs to the RNA methyltransferase RlmH family. As to quaternary structure, homodimer.

It localises to the cytoplasm. It catalyses the reaction pseudouridine(1915) in 23S rRNA + S-adenosyl-L-methionine = N(3)-methylpseudouridine(1915) in 23S rRNA + S-adenosyl-L-homocysteine + H(+). Functionally, specifically methylates the pseudouridine at position 1915 (m3Psi1915) in 23S rRNA. The sequence is that of Ribosomal RNA large subunit methyltransferase H from Solidesulfovibrio magneticus (strain ATCC 700980 / DSM 13731 / RS-1) (Desulfovibrio magneticus).